A 626-amino-acid chain; its full sequence is Probable serine/threonine-protein kinase CCRP1 (626 aa).

Residues 36 to 291 (YSKGRMLGKG…LDEILQHPFL (256 aa)) form the Protein kinase domain. ATP contacts are provided by residues 42–50 (LGKGGFAKC) and Lys65. At Ser71 the chain carries Phosphoserine. Asp159 (proton acceptor) is an active-site residue. Residues 399–433 (NFTKTGSWQSNLNGTQSVKGSSRPQTVQQKGDLKS) are disordered. Polar residues predominate over residues 400-427 (FTKTGSWQSNLNGTQSVKGSSRPQTVQQ). POLO box domains lie at 471–554 (WVKK…YLEG) and 574–626 (YVKK…PISP).

The protein belongs to the protein kinase superfamily. Ser/Thr protein kinase family. CDC5/Polo subfamily. Embryo.

It carries out the reaction L-seryl-[protein] + ATP = O-phospho-L-seryl-[protein] + ADP + H(+). The catalysed reaction is L-threonyl-[protein] + ATP = O-phospho-L-threonyl-[protein] + ADP + H(+). May play a role in the division of some cell types. In Zea mays (Maize), this protein is Probable serine/threonine-protein kinase CCRP1 (CCRP1).